A 150-amino-acid chain; its full sequence is MKSIEVHTDGSCLGNPGPGGWAALLRYNGREKELAGGEANSTNNRMELMAAIMALETLTEPCQILLHTDSQYVRQGITEWMPGWVRRGWKTSGGDPVKNRELWERLHAATQRHSIEWRWVKGHNGDPDNERVDVLARNQAIAQRGGLATS.

The region spanning 1 to 141 (MKSIEVHTDG…VDVLARNQAI (141 aa)) is the RNase H type-1 domain. Residues Asp9, Glu47, Asp69, and Asp133 each contribute to the Mg(2+) site.

This sequence belongs to the RNase H family. In terms of assembly, monomer. It depends on Mg(2+) as a cofactor.

The protein localises to the cytoplasm. The catalysed reaction is Endonucleolytic cleavage to 5'-phosphomonoester.. In terms of biological role, endonuclease that specifically degrades the RNA of RNA-DNA hybrids. In Xanthomonas campestris pv. campestris (strain 8004), this protein is Ribonuclease H.